Consider the following 113-residue polypeptide: U11-theraphotoxin-Hhn1d (113 aa).

The signal sequence occupies residues 1–21; that stretch reads MNTVRVTFLLVFVVAVSLGQA. The propeptide occupies 22–74; it reads DKDENRMEMKDKTEQGKSYLHFAENLLLQKLEDVEAKLLEKDSEKSINSRQKR. 3 disulfides stabilise this stretch: Cys-75-Cys-90, Cys-82-Cys-95, and Cys-89-Cys-110.

It belongs to the neurotoxin 14 (magi-1) family. 01 (HNTX-16) subfamily. In terms of tissue distribution, expressed by the venom gland.

It is found in the secreted. In terms of biological role, probable ion channel inhibitor. In Cyriopagopus hainanus (Chinese bird spider), this protein is U11-theraphotoxin-Hhn1d.